The primary structure comprises 254 residues: 5'/3'-nucleotidase SurE (254 aa).

A divalent metal cation-binding residues include Asp9, Asp10, Ser40, and Asn93.

This sequence belongs to the SurE nucleotidase family. Requires a divalent metal cation as cofactor.

It is found in the cytoplasm. The enzyme catalyses a ribonucleoside 5'-phosphate + H2O = a ribonucleoside + phosphate. It catalyses the reaction a ribonucleoside 3'-phosphate + H2O = a ribonucleoside + phosphate. The catalysed reaction is [phosphate](n) + H2O = [phosphate](n-1) + phosphate + H(+). Nucleotidase with a broad substrate specificity as it can dephosphorylate various ribo- and deoxyribonucleoside 5'-monophosphates and ribonucleoside 3'-monophosphates with highest affinity to 3'-AMP. Also hydrolyzes polyphosphate (exopolyphosphatase activity) with the preference for short-chain-length substrates (P20-25). Might be involved in the regulation of dNTP and NTP pools, and in the turnover of 3'-mononucleotides produced by numerous intracellular RNases (T1, T2, and F) during the degradation of various RNAs. The protein is 5'/3'-nucleotidase SurE of Photorhabdus laumondii subsp. laumondii (strain DSM 15139 / CIP 105565 / TT01) (Photorhabdus luminescens subsp. laumondii).